The primary structure comprises 247 residues: Terpene cyclase adrI (247 aa).

Helical transmembrane passes span 20-40 (VAEFLRILAGICWTLNYFSML), 51-71 (TGIFPLCNDIGWEFIYAFIYP), 76-96 (HWEGGVRVWFLVHCIVIFFII), 112-132 (NLYFLYGIVTIGFAIGQYSFA), and 141-161 (FFYGGVLCQTLASLGPIAQIL). Asn-164 carries N-linked (GlcNAc...) asparagine glycosylation. 2 helical membrane-spanning segments follow: residues 179–199 (FGGFIKLTIYYLTGNAAGPWF) and 205–225 (KFYIGLTLILDFTYPICYYVI).

It belongs to the paxB family.

Its subcellular location is the membrane. Its pathway is secondary metabolite biosynthesis; terpenoid biosynthesis. In terms of biological role, terpene cyclase; part of the gene cluster that mediates the biosynthesis of andrastins, meroterpenoid compounds that exhibit inhibitory activity against ras farnesyltransferase, suggesting that they could be promising leads for antitumor agents. The first step of the pathway is the synthesis of 3,5-dimethylorsellinic acid (DMOA) by the polyketide synthase adrD via condensation of one acetyl-CoA starter unit with 3 malonyl-CoA units and 2 methylations. DMAO is then converted to farnesyl-DMAO by the prenyltransferase adrG. The methyltransferase adrK catalyzes the methylation of the carboxyl group of farnesyl-DMAO to farnesyl-DMAO methyl ester which is further converted to epoxyfarnesyl-DMAO methyl ester by the FAD-dependent monooxygenase adrH. The terpene cyclase adrI then catalyzes the carbon skeletal rearrangement to generate the andrastin E, the first compound in the pathway having the andrastin scaffold, with the tetracyclic ring system. The post-cyclization tailoring enzymes adrF, adrE, adrJ, and adrA, are involved in the conversion of andrastin E into andrastin A. The short chain dehydrogenase adrF is responsible for the oxidation of the C-3 a hydroxyl group of andrastin E to yield the corresponding ketone, andrastin D. The ketoreductase adrE stereoselectively reduces the carbonyl moiety to reverse the stereochemistry of the C-3 position to yield andrastin F. The acetyltransferase adrJ is the acetyltransferase that attaches the acetyl group to the C-3 hydroxyl group of andrastin F to yield andrastin C. Finally, the cytochrome P450 monooxygenase adrA catalyzes two sequential oxidation reactions of the C-23 methyl group, to generate the corresponding alcohol andrastin B, and aldehyde andrastin A. The polypeptide is Terpene cyclase adrI (Penicillium rubens (strain ATCC 28089 / DSM 1075 / NRRL 1951 / Wisconsin 54-1255) (Penicillium chrysogenum)).